The following is a 662-amino-acid chain: 3',5'-cyclic-AMP phosphodiesterase, isoform F (662 aa).

Disordered stretches follow at residues 79–108 and 207–245; these read VPASNKSRRPNQSSSASRSGNPPGAPLSQG and SAGQYARSRSPRGPPMSQISGVKRPLSHTNSFTGERLPT. Residues 80 to 98 show a composition bias toward polar residues; it reads PASNKSRRPNQSSSASRSG. The PDEase domain maps to 248 to 577; sequence VETPRENELG…DYYQSMIPPS (330 aa). The active-site Proton donor is the histidine 324. 324 to 328 is a 3',5'-cyclic AMP binding site; that stretch reads HNSLH. A divalent metal cation contacts are provided by histidine 328, histidine 364, aspartate 365, and aspartate 482. 3',5'-cyclic AMP is bound by residues aspartate 365, aspartate 482, and glutamine 533. A compositionally biased stretch (acidic residues) spans 599–616; that stretch reads EESDQENLAELEEGDESG. Residues 599–662 form a disordered region; it reads EESDQENLAE…CQNQPQHGGM (64 aa). The span at 617–634 shows a compositional bias: low complexity; it reads GESTTTGTTGTTAASALS. The span at 635–646 shows a compositional bias: gly residues; it reads GAGGGGGGGGGM. Over residues 652-662 the composition is skewed to polar residues; sequence GCQNQPQHGGM.

Belongs to the cyclic nucleotide phosphodiesterase family. PDE4 subfamily. Monomer. A divalent metal cation serves as cofactor.

The enzyme catalyses 3',5'-cyclic AMP + H2O = AMP + H(+). It functions in the pathway purine metabolism; 3',5'-cyclic AMP degradation; AMP from 3',5'-cyclic AMP: step 1/1. Functionally, hydrolyzes the second messenger cAMP, which is a key regulator of many important physiological processes. Vital for female fertility. Required for learning/memory. This is 3',5'-cyclic-AMP phosphodiesterase, isoform F from Drosophila melanogaster (Fruit fly).